The primary structure comprises 424 residues: Enolase (424 aa).

Gln165 contributes to the (2R)-2-phosphoglycerate binding site. Glu207 functions as the Proton donor in the catalytic mechanism. Mg(2+) is bound by residues Asp244, Glu283, and Asp310. Residues Lys335, Arg364, Ser365, and Lys386 each contribute to the (2R)-2-phosphoglycerate site. The Proton acceptor role is filled by Lys335.

Belongs to the enolase family. The cofactor is Mg(2+).

Its subcellular location is the cytoplasm. The protein resides in the secreted. It localises to the cell surface. The catalysed reaction is (2R)-2-phosphoglycerate = phosphoenolpyruvate + H2O. The protein operates within carbohydrate degradation; glycolysis; pyruvate from D-glyceraldehyde 3-phosphate: step 4/5. Functionally, catalyzes the reversible conversion of 2-phosphoglycerate (2-PG) into phosphoenolpyruvate (PEP). It is essential for the degradation of carbohydrates via glycolysis. The sequence is that of Enolase from Chlamydia abortus (strain DSM 27085 / S26/3) (Chlamydophila abortus).